The following is a 273-amino-acid chain: SUMO-1 cysteine protease S273R (273 aa).

Residues histidine 168 and asparagine 187 contribute to the active site. Glutamine 226 contributes to the substrate binding site. The active-site Nucleophile is cysteine 232.

Belongs to the peptidase C63 family.

It localises to the host cytoplasm. The protein resides in the virion. Cysteine protease that plays several role during infection including processing of the structural polyprotein or inhibition of the host immune response. Catalyzes the maturation of the pp220 and pp62 polyprotein precursors into core-shell proteins. Plays a role in the disruption of host pyroptosis via specific cleavage of gasdermin D/GSDMD. In addition, strongly decreases the host cGAS-STING signaling by targeting IKBKE via its enzymatic activity. Also impairs host FOXJ1-mediated antiviral effect via degradation of FOXJ1. This is SUMO-1 cysteine protease S273R from Ornithodoros (relapsing fever ticks).